Reading from the N-terminus, the 178-residue chain is ATP synthase subunit b, chloroplastic (178 aa).

A helical transmembrane segment spans residues 34 to 50 (LAILTGGIFYLGSNALS).

Belongs to the ATPase B chain family. In terms of assembly, F-type ATPases have 2 components, F(1) - the catalytic core - and F(0) - the membrane proton channel. F(1) has five subunits: alpha(3), beta(3), gamma(1), delta(1), epsilon(1). F(0) has four main subunits: a(1), b(1), b'(1) and c(10-14). The alpha and beta chains form an alternating ring which encloses part of the gamma chain. F(1) is attached to F(0) by a central stalk formed by the gamma and epsilon chains, while a peripheral stalk is formed by the delta, b and b' chains.

Its subcellular location is the plastid. It is found in the chloroplast thylakoid membrane. Functionally, f(1)F(0) ATP synthase produces ATP from ADP in the presence of a proton or sodium gradient. F-type ATPases consist of two structural domains, F(1) containing the extramembraneous catalytic core and F(0) containing the membrane proton channel, linked together by a central stalk and a peripheral stalk. During catalysis, ATP synthesis in the catalytic domain of F(1) is coupled via a rotary mechanism of the central stalk subunits to proton translocation. Its function is as follows. Component of the F(0) channel, it forms part of the peripheral stalk, linking F(1) to F(0). This chain is ATP synthase subunit b, chloroplastic, found in Ochrosphaera neapolitana.